We begin with the raw amino-acid sequence, 217 residues long: MKAVLILSGGMDSTTLLYDLIDQGYEVSAITFDYHQKHKKEIACAQKTCAKLSIPHKIVNLSVLNDLAPSSLTRADRDVPEGHYAEESMKQTVVPNRNMVFLSLAASYAIGIGAGHLFYAAHAGDHAIYPDCRPVFVSAMSTAFHLCDWNDLVLQVPYLMLSKGDIAKKGIGLGVDYANTWSCYKGKERSCGKCGACTERLEAFREAGAADPLEYEP.

7-17 (LSGGMDSTTLL) lines the ATP pocket. The Zn(2+) site is built by Cys183, Cys191, Cys194, and Cys197.

Belongs to the QueC family. Zn(2+) serves as cofactor.

The enzyme catalyses 7-carboxy-7-deazaguanine + NH4(+) + ATP = 7-cyano-7-deazaguanine + ADP + phosphate + H2O + H(+). It participates in purine metabolism; 7-cyano-7-deazaguanine biosynthesis. In terms of biological role, catalyzes the ATP-dependent conversion of 7-carboxy-7-deazaguanine (CDG) to 7-cyano-7-deazaguanine (preQ(0)). The chain is 7-cyano-7-deazaguanine synthase from Methanoregula boonei (strain DSM 21154 / JCM 14090 / 6A8).